The chain runs to 319 residues: Serine acetyltransferase, plasmid (319 aa).

It belongs to the transferase hexapeptide repeat family.

It is found in the cytoplasm. The catalysed reaction is L-serine + acetyl-CoA = O-acetyl-L-serine + CoA. The protein operates within amino-acid biosynthesis; L-cysteine biosynthesis; L-cysteine from L-serine: step 1/2. This chain is Serine acetyltransferase, plasmid (srpH), found in Synechococcus elongatus (strain ATCC 33912 / PCC 7942 / FACHB-805) (Anacystis nidulans R2).